A 562-amino-acid chain; its full sequence is Arginine--tRNA ligase (562 aa).

The 'HIGH' region motif lies at 126 to 136; it reads ANPTGPLNVGH.

It belongs to the class-I aminoacyl-tRNA synthetase family. Monomer.

The protein localises to the cytoplasm. The enzyme catalyses tRNA(Arg) + L-arginine + ATP = L-arginyl-tRNA(Arg) + AMP + diphosphate. In Salinibacter ruber (strain DSM 13855 / M31), this protein is Arginine--tRNA ligase.